Consider the following 382-residue polypeptide: Protein RecA (382 aa).

79–86 (GPESSGKT) lines the ATP pocket. The disordered stretch occupies residues 362–382 (ATKSAAKGSEVQADVKTKGAA).

The protein belongs to the RecA family.

It localises to the cytoplasm. Its function is as follows. Can catalyze the hydrolysis of ATP in the presence of single-stranded DNA, the ATP-dependent uptake of single-stranded DNA by duplex DNA, and the ATP-dependent hybridization of homologous single-stranded DNAs. It interacts with LexA causing its activation and leading to its autocatalytic cleavage. The chain is Protein RecA from Synechococcus sp. (strain WH7803).